The primary structure comprises 211 residues: Chaperone protein TorD (211 aa).

The protein belongs to the TorD/DmsD family. TorD subfamily.

Its subcellular location is the cytoplasm. Involved in the biogenesis of TorA. Acts on TorA before the insertion of the molybdenum cofactor and, as a result, probably favors a conformation of the apoenzyme that is competent for acquiring the cofactor. The chain is Chaperone protein TorD from Shewanella loihica (strain ATCC BAA-1088 / PV-4).